A 577-amino-acid polypeptide reads, in one-letter code: MSIVELFHYSLFLGLFVAFTYNKKEPPAFGAALAFWCILLSFLGLLFCHISNNNSNYNVLTANAPFFYQISGTWSNHEGSILLWCWILSFYGFLLCYRGRPQSHNVSKRGGYRETFFYFFVLNFVKNFILSLLCYEQKTLAVPQLYTPFVLRTLVDSELCSRRNRTFDGPALFYAPLYPERKMSFAFLGARLPVVRGEGKRTYLLLHLARDDKERASSIDEQRIDGALGIALFFSFFLLASSDFFVRNFFVCTEPLAELNPVLQDPILAIHPPCIYAGDVASAMGFCLCRSKMMNGIVALHSPPMWKDAAEKNGRLLCSAGCVGFRITSELFTLKFKDVGAKCYPALLLRSNRSPLMLLRRRFFAFSLLWTGALVDTGREQAKRVVRNGKKDTATSPLSWTAGANTVVSDQDQEPIRIWILTCWCFLNVGILLGSWWAYHELGWGGWWFWDPVENASFMPWVLATACIHSVILPLLHSCTLLINIVTFLCCVLGTFSIRSGLLASVHSFATDDTRGIFLWRFFLLMTGISMILFSQMKQQASVRRTYQKEMVVARSTLVHLRHSARAQPRPQLLWKN.

The protein belongs to the CcmF/CycK/Ccl1/NrfE/CcsA family.

It is found in the mitochondrion. In terms of biological role, could be involved in assembly and maturation of cytochromes c. May play a role in guidance of apocytochromes and heme groups for the covalent linkage introduced by the cytochrome-c-heme lyase. The protein is Probable cytochrome c biosynthesis protein of Oenothera berteroana (Bertero's evening primrose).